A 492-amino-acid chain; its full sequence is MASPSGKGSWTPEAPGFGPRALAPDLVDSVDDAEGLYVAVERCPLCNTTRRRLTCAKCVQSGDFVYFDGRDRERFIDKKERLSQLKNKQEEFQKEVLKAMEGKRLTDQLRWKIMSCKMRIEQLKQTICKGNEEMKKNSEGLLKNKEKNQKLYSRAQRHQEKKEKIQRHNRKLGDLVEKKTSDLREHYDRLACLRRLHILELTSVIFPMDEVKTSGRDPADVSSETDSAMTSSMVSKLAEARRTTYLSGRWVCDDHNGDTSISITGPWISLPNNGDYSAYYNWVEEKKTTQGPDMEHNNPAYTISAALGYATQLVNIVSHILDINLPKKLCNSEFCGENLSKQRLTRAVRKLNANILYLCSSQHVNLDQLQPLHTLRNLMHLVSPHSEHLGRSGPFEVRADLEESMEFVDPGVAGESDVSGDERVSDEETDLGTDWENLPSPRFCDIPSQPVEVSQSQSTQASPPIASSSAGGMISSAAASVTSWFKAYTGHR.

Serine 29 carries the phosphoserine modification. Residues 70–180 are a coiled coil; sequence RDRERFIDKK…KLGDLVEKKT (111 aa). 2 disordered regions span residues 213–232 and 411–473; these read TSGRDPADVSSETDSAMTSS and GVAG…AGGM. The span at 222–232 shows a compositional bias: polar residues; the sequence is SSETDSAMTSS. A Phosphoserine modification is found at serine 416. The span at 424–433 shows a compositional bias: acidic residues; that stretch reads VSDEETDLGT. Threonine 429 is modified (phosphothreonine). A compositionally biased stretch (low complexity) spans 447-473; it reads PSQPVEVSQSQSTQASPPIASSSAGGM.

Belongs to the ATG14 family. As to quaternary structure, forms homooligomers; homo-oligomerization is essential for the roles in membrane tethering and enhancement of SNARE-mediated fusion. Component of the PI3K (PI3KC3/PI3K-III/class III phosphatidylinositol 3-kinase) complex I (PI3KC3-C1) in which the core composed of the catalytic subunit PIK3C3, the regulatory subunit PIK3R4 and BECN1 is associated with ATG14. PI3KC3-C1 displays a V-shaped architecture with PIK3R4 serving as a bridge between PIK3C3 and the ATG14:BECN1 subcomplex. PI3KC3-C1 can associate with further regulatory subunits. Interacts with PIK3CB. Interacts (via coiled-coil domain) with BECN2 (via coiled-coil domain); this interaction is tighter than BECN2 self-association. Interacts with the STX17-SNAP29 binary t-SNARE complex. Interacts with NRBF2. Interacts with PIK3C3 and BECN1; this interaction is increased in the absence of TMEM39A. Interacts with STEEP1; the interaction is required for trafficking of STING1 from the endoplasmic reticulum. Interacts with ARMC3 (via ARM domains). Post-translationally, ubiquitinated via 'Lys-6', 'Lys-11' and 'Lys-63'-linked polyubiquitin chains on multiple lysines by MARCHF7, leading to ATG14 aggregation and loss of interaction with STX17.

It localises to the cytoplasm. The protein resides in the endoplasmic reticulum membrane. The protein localises to the preautophagosomal structure membrane. Its function is as follows. Required for both basal and inducible autophagy. Determines the localization of the autophagy-specific PI3-kinase complex. Plays a role in autophagosome formation and MAP1LC3/LC3 conjugation to phosphatidylethanolamine. Promotes BECN1 translocation from the trans-Golgi network to autophagosomes. Enhances PIK3C3 activity in a BECN1-dependent manner. Essential for the autophagy-dependent phosphorylation of BECN1. Stimulates the phosphorylation of BECN1, but suppresses the phosphorylation PIK3C3 by AMPK. Binds to STX17-SNAP29 binary t-SNARE complex on autophagosomes and primes it for VAMP8 interaction to promote autophagosome-endolysosome fusion. Modulates the hepatic lipid metabolism. This is Beclin 1-associated autophagy-related key regulator from Rattus norvegicus (Rat).